The following is a 63-amino-acid chain: Large ribosomal subunit protein uL29 (63 aa).

Belongs to the universal ribosomal protein uL29 family.

This is Large ribosomal subunit protein uL29 from Flavobacterium psychrophilum (strain ATCC 49511 / DSM 21280 / CIP 103535 / JIP02/86).